Reading from the N-terminus, the 396-residue chain is S-adenosylmethionine synthase (396 aa).

His-16 is a binding site for ATP. Asp-18 contacts Mg(2+). K(+) is bound at residue Glu-44. Residues Glu-57 and Gln-100 each contribute to the L-methionine site. Residues 100 to 110 (QSVDINQGVDR) form a flexible loop region. Residues 165–167 (DAK), Asp-240, 246–247 (RK), Ala-263, and Lys-267 each bind ATP. Asp-240 contacts L-methionine. Lys-271 serves as a coordination point for L-methionine.

It belongs to the AdoMet synthase family. As to quaternary structure, homotetramer; dimer of dimers. It depends on Mg(2+) as a cofactor. K(+) is required as a cofactor.

The protein localises to the cytoplasm. The catalysed reaction is L-methionine + ATP + H2O = S-adenosyl-L-methionine + phosphate + diphosphate. Its pathway is amino-acid biosynthesis; S-adenosyl-L-methionine biosynthesis; S-adenosyl-L-methionine from L-methionine: step 1/1. Functionally, catalyzes the formation of S-adenosylmethionine (AdoMet) from methionine and ATP. The overall synthetic reaction is composed of two sequential steps, AdoMet formation and the subsequent tripolyphosphate hydrolysis which occurs prior to release of AdoMet from the enzyme. In Pseudomonas aeruginosa (strain UCBPP-PA14), this protein is S-adenosylmethionine synthase.